The chain runs to 427 residues: Gamma-glutamyl phosphate reductase (427 aa).

This sequence belongs to the gamma-glutamyl phosphate reductase family.

It localises to the cytoplasm. The catalysed reaction is L-glutamate 5-semialdehyde + phosphate + NADP(+) = L-glutamyl 5-phosphate + NADPH + H(+). It participates in amino-acid biosynthesis; L-proline biosynthesis; L-glutamate 5-semialdehyde from L-glutamate: step 2/2. Its function is as follows. Catalyzes the NADPH-dependent reduction of L-glutamate 5-phosphate into L-glutamate 5-semialdehyde and phosphate. The product spontaneously undergoes cyclization to form 1-pyrroline-5-carboxylate. The polypeptide is Gamma-glutamyl phosphate reductase (Brucella canis (strain ATCC 23365 / NCTC 10854 / RM-666)).